Consider the following 67-residue polypeptide: Small ribosomal subunit protein eS31 (67 aa).

4 residues coordinate Zn(2+): Cys-31, Cys-34, Cys-49, and Cys-52. The C4-type zinc-finger motif lies at 31 to 52; sequence CPKCGAGVFMAEHLNRFACGKC.

The protein belongs to the eukaryotic ribosomal protein eS31 family. In terms of assembly, part of the 30S ribosomal subunit. It depends on Zn(2+) as a cofactor.

The protein is Small ribosomal subunit protein eS31 of Methanococcus maripaludis (strain C6 / ATCC BAA-1332).